Reading from the N-terminus, the 330-residue chain is Phosphate acyltransferase (330 aa).

This sequence belongs to the PlsX family. Homodimer. Probably interacts with PlsY.

Its subcellular location is the cytoplasm. It carries out the reaction a fatty acyl-[ACP] + phosphate = an acyl phosphate + holo-[ACP]. Its pathway is lipid metabolism; phospholipid metabolism. Catalyzes the reversible formation of acyl-phosphate (acyl-PO(4)) from acyl-[acyl-carrier-protein] (acyl-ACP). This enzyme utilizes acyl-ACP as fatty acyl donor, but not acyl-CoA. This chain is Phosphate acyltransferase, found in Bacillus anthracis (strain A0248).